The sequence spans 231 residues: 7-cyano-7-deazaguanine synthase (231 aa).

Residue 8–18 (FSGGQDSTTCL) coordinates ATP. Residues C188, C197, C200, and C203 each contribute to the Zn(2+) site.

This sequence belongs to the QueC family. Requires Zn(2+) as cofactor.

The enzyme catalyses 7-carboxy-7-deazaguanine + NH4(+) + ATP = 7-cyano-7-deazaguanine + ADP + phosphate + H2O + H(+). It participates in purine metabolism; 7-cyano-7-deazaguanine biosynthesis. Catalyzes the ATP-dependent conversion of 7-carboxy-7-deazaguanine (CDG) to 7-cyano-7-deazaguanine (preQ(0)). The protein is 7-cyano-7-deazaguanine synthase of Escherichia coli (strain ATCC 8739 / DSM 1576 / NBRC 3972 / NCIMB 8545 / WDCM 00012 / Crooks).